The chain runs to 447 residues: Divalent metal cation transporter MntH (447 aa).

The next 11 membrane-spanning stretches (helical) occupy residues 26–48 (AGFWKTLMAYSGPGFLIAVGYMD), 65–85 (TLLSVILLSSLIAMLLQAMSA), 108–128 (GFLLWIVAELAIMATDIAEII), 140–160 (IPLIIGILITAADVLILLLLM), 169–189 (AIVATLVAVILIVFAYEVLLS), 212–232 (MLYLSLGIVGATVMPHDLYLG), 264–284 (LFLAFIVNSLLLILGAALFYG), 304–324 (IVGAIASPVLSMLFAVALLAS), 359–379 (VLSVAPVLIFAIYYHGDEAKI), 383–403 (LTFSQVFLSVALPFAVIPLVI), and 426–446 (TATIVLILLNIYLILQTLGLI).

The protein belongs to the NRAMP family.

It localises to the cell membrane. In terms of biological role, h(+)-stimulated, divalent metal cation uptake system. The polypeptide is Divalent metal cation transporter MntH (Pediococcus pentosaceus (strain ATCC 25745 / CCUG 21536 / LMG 10740 / 183-1w)).